Reading from the N-terminus, the 516-residue chain is Maturase K (516 aa).

It belongs to the intron maturase 2 family. MatK subfamily.

It localises to the plastid. Its subcellular location is the chloroplast. Functionally, usually encoded in the trnK tRNA gene intron. Probably assists in splicing its own and other chloroplast group II introns. This chain is Maturase K, found in Colchicum speciosum (Giant meadow saffron).